Reading from the N-terminus, the 246-residue chain is Polyhedrin (246 aa).

The protein belongs to the polyhedrin family.

Functionally, major component of the virus occlusion bodies, which are large proteinaceous structures (polyhedra), that protect the virus from the outside environment for extended periods until they are ingested by insect larvae. The polypeptide is Polyhedrin (PH) (Lepidoptera (butterflies and moths)).